The primary structure comprises 116 residues: Non-specific lipid-transfer protein C, cotyledon-specific isoform (116 aa).

A signal peptide spans 1–24 (MKNVVFSVLLLLSFLFCLANTNEA). Intrachain disulfides connect Cys-28–Cys-76, Cys-38–Cys-53, Cys-54–Cys-98, and Cys-74–Cys-112.

It belongs to the plant LTP family.

Functionally, plant non-specific lipid-transfer proteins transfer phospholipids as well as galactolipids across membranes. May play a role in wax or cutin deposition in the cell walls of expanding epidermal cells and certain secretory tissues. The polypeptide is Non-specific lipid-transfer protein C, cotyledon-specific isoform (Ricinus communis (Castor bean)).